We begin with the raw amino-acid sequence, 330 residues long: MNVYYEQDADLKHLQGKNIAVLGYGSQGHAHALNLKESGLNVCVGLRTDSSSCAKARQAGLEVNTIADAVKWADIIMILLPDQYQKAIYETEIAPNLETGNTLAFAHGFNIHYKQIVPPETVNVIMIAPKSPGHLVRRTFTEGNGVPCLIAVHQDYTGNAKEQALAWAKGLGGAKAGVIETTIKDETETDLFGEQAVLCGGSAELIKAGFETLVEAGYPEELAYFECLHELKLIVDLYYEGGLSRMNYSVSDTAEYGGMTRGPRLITPAVKAEMKKILEEVQDGRFAKEFIDECNSGYKNLTSLRESNTNHPIEKVGAKLRNMMSWLIKK.

One can recognise a KARI N-terminal Rossmann domain in the interval Met1–Thr181. NADP(+) is bound by residues Tyr24–Gln27, Arg47, Ser50, Ser52, and Asp82–Gln85. His107 is an active-site residue. Gly133 contributes to the NADP(+) binding site. Residues Thr182 to Leu327 form the KARI C-terminal knotted domain. Residues Asp190, Glu194, Glu226, and Glu230 each contribute to the Mg(2+) site. Ser251 serves as a coordination point for substrate.

Belongs to the ketol-acid reductoisomerase family. It depends on Mg(2+) as a cofactor.

It catalyses the reaction (2R)-2,3-dihydroxy-3-methylbutanoate + NADP(+) = (2S)-2-acetolactate + NADPH + H(+). The catalysed reaction is (2R,3R)-2,3-dihydroxy-3-methylpentanoate + NADP(+) = (S)-2-ethyl-2-hydroxy-3-oxobutanoate + NADPH + H(+). It participates in amino-acid biosynthesis; L-isoleucine biosynthesis; L-isoleucine from 2-oxobutanoate: step 2/4. Its pathway is amino-acid biosynthesis; L-valine biosynthesis; L-valine from pyruvate: step 2/4. Functionally, involved in the biosynthesis of branched-chain amino acids (BCAA). Catalyzes an alkyl-migration followed by a ketol-acid reduction of (S)-2-acetolactate (S2AL) to yield (R)-2,3-dihydroxy-isovalerate. In the isomerase reaction, S2AL is rearranged via a Mg-dependent methyl migration to produce 3-hydroxy-3-methyl-2-ketobutyrate (HMKB). In the reductase reaction, this 2-ketoacid undergoes a metal-dependent reduction by NADPH to yield (R)-2,3-dihydroxy-isovalerate. This is Ketol-acid reductoisomerase (NADP(+)) from Prosthecochloris aestuarii (strain DSM 271 / SK 413).